Consider the following 899-residue polypeptide: UPF0182 protein Mhun_1303 (899 aa).

A run of 7 helical transmembrane segments spans residues 6–26 (LLIFIPAAVILLFFLLTDLLS), 39–59 (VFLTILITSAALFVIGTLLFF), 93–113 (VAAGITGLSLSSSWEIILAFL), 136–156 (LPFYTILIQYLLALFVFTLII), 196–216 (FLPQVNCLLFLIFTTLAAFLW), 240–260 (ITIPALTILTVIAFLIGLLFL), and 271–291 (IAYGIGGFFIIAILSAGAGFL).

This sequence belongs to the UPF0182 family.

It is found in the cell membrane. The sequence is that of UPF0182 protein Mhun_1303 from Methanospirillum hungatei JF-1 (strain ATCC 27890 / DSM 864 / NBRC 100397 / JF-1).